A 548-amino-acid polypeptide reads, in one-letter code: MSAKEIRFNEEGRNAILRGVNALADAVKVTLGPKGRNVIIEKSFGSPLITKDGVSVAKEVELENKFENMGAQLVKEVASKTSDVAGDGTTTATVLAQAIYKQGSKLVAAGHNPMEIKRGIDKAVEAIVAELQKISKPIKDHKEIAQVGTISANNDKTIGDIIAEAMEKVGKEGVITVEEAKAMETSLETVEGMQFDRGYLSPYFVSDPERMEATLENATILIYDKKISNMKDMLPVLEQTAKSGRPLMIIAEDIEGEALATLVVNKLRGVLNVCAVKAPGFGDRRKAMLEDIAILTGGKVISEEMGFKLENTTMEMLGRAKRIVVDKDNTTIIDGDGSEADIQGRVKQIRAQIEDTTSDYDREKLQERLAKLVGGVAVIKVGAATETEMKEKKARVEDALHATRAAVDEGIVPGGGVAYIRALNALDSVVLPAEQQFGVTIIKSSLEAPIRQIADNAGIDASIVVDKVKNGKEAFGYNAADDTYVDMLEAGIIDPTKVSRCALQNASSVAGLMLTTECMIAEKPKKDSGMPAMPGGMGGMGGMGGMDY.

Residues 30–33 (TLGP), lysine 51, 87–91 (DGTTT), glycine 415, 478–480 (NAA), and aspartate 494 each bind ATP.

The protein belongs to the chaperonin (HSP60) family. As to quaternary structure, forms a cylinder of 14 subunits composed of two heptameric rings stacked back-to-back. Interacts with the co-chaperonin GroES.

The protein localises to the cytoplasm. The enzyme catalyses ATP + H2O + a folded polypeptide = ADP + phosphate + an unfolded polypeptide.. Functionally, together with its co-chaperonin GroES, plays an essential role in assisting protein folding. The GroEL-GroES system forms a nano-cage that allows encapsulation of the non-native substrate proteins and provides a physical environment optimized to promote and accelerate protein folding. The protein is Chaperonin GroEL of Trichlorobacter lovleyi (strain ATCC BAA-1151 / DSM 17278 / SZ) (Geobacter lovleyi).